The chain runs to 298 residues: uncharacterized protein (298 aa).

It localises to the cytoplasm. Its subcellular location is the nucleus. This is an uncharacterized protein from Schizosaccharomyces pombe (strain 972 / ATCC 24843) (Fission yeast).